Consider the following 184-residue polypeptide: Peptidyl-tRNA hydrolase (184 aa).

Tyrosine 14 provides a ligand contact to tRNA. Histidine 19 acts as the Proton acceptor in catalysis. The tRNA site is built by phenylalanine 60 and asparagine 62.

The protein belongs to the PTH family. In terms of assembly, monomer.

The protein localises to the cytoplasm. The enzyme catalyses an N-acyl-L-alpha-aminoacyl-tRNA + H2O = an N-acyl-L-amino acid + a tRNA + H(+). In terms of biological role, hydrolyzes ribosome-free peptidyl-tRNAs (with 1 or more amino acids incorporated), which drop off the ribosome during protein synthesis, or as a result of ribosome stalling. Catalyzes the release of premature peptidyl moieties from peptidyl-tRNA molecules trapped in stalled 50S ribosomal subunits, and thus maintains levels of free tRNAs and 50S ribosomes. The protein is Peptidyl-tRNA hydrolase of Mesomycoplasma hyopneumoniae (strain 232) (Mycoplasma hyopneumoniae).